The sequence spans 399 residues: Protochlorophyllide reductase, chloroplastic (399 aa).

The N-terminal 64 residues, 1–64 (MALQTASMLP…RQKVGAVRAE (64 aa)), are a transit peptide targeting the chloroplast.

The protein belongs to the short-chain dehydrogenases/reductases (SDR) family. POR subfamily.

Its subcellular location is the plastid. It is found in the chloroplast. It carries out the reaction chlorophyllide a + NADP(+) = protochlorophyllide a + NADPH + H(+). It functions in the pathway porphyrin-containing compound metabolism; chlorophyll biosynthesis. Its function is as follows. Phototransformation of protochlorophyllide (Pchlide) to chlorophyllide (Chlide). The protein is Protochlorophyllide reductase, chloroplastic (3PCR) of Pisum sativum (Garden pea).